We begin with the raw amino-acid sequence, 247 residues long: MGAVEARLRSELKKRKTLLFALIDSEVSDTKSAQDLARGAEKAGASAILVGGSSTGDQAETSRIVGDIKEATTIPVILFPGNVTGVAPGADAILFSSLMNSENPYFITQAQALGAPSVLKFGLEALPTAYLVIGEGTSVWFVGAARGIPLGKPRIAAAYSLAARFLGMRFVYLEAGSGAESPVKPEMIRAVREAFDGFLIVGGGIRDEEAARRASEAGADAIVIGTMLEGGGSLDKLSRIAGAIGGT.

Asp-24 and Ser-53 together coordinate Mg(2+). Sn-glycerol 1-phosphate contacts are provided by residues 172 to 178 (YLEAGSG), 203 to 204 (GG), and 225 to 226 (GT).

The protein belongs to the GGGP/HepGP synthase family. Group II subfamily. Mg(2+) is required as a cofactor.

The protein localises to the cytoplasm. The enzyme catalyses sn-glycerol 1-phosphate + (2E,6E,10E)-geranylgeranyl diphosphate = sn-3-O-(geranylgeranyl)glycerol 1-phosphate + diphosphate. Its pathway is membrane lipid metabolism; glycerophospholipid metabolism. Functionally, prenyltransferase that catalyzes the transfer of the geranylgeranyl moiety of geranylgeranyl diphosphate (GGPP) to the C3 hydroxyl of sn-glycerol-1-phosphate (G1P). This reaction is the first ether-bond-formation step in the biosynthesis of archaeal membrane lipids. This chain is Geranylgeranylglyceryl phosphate synthase, found in Cenarchaeum symbiosum (strain A).